The primary structure comprises 152 residues: Cytosolic calcium-binding protein 1 (152 aa).

Tandem repeats lie at residues 57-62 (VEETEK), 67-71 (TEEAQ), 78-82 (VEIKK), 104-108 (VEAKK), 112-116 (VEEKK), 124-129 (VEEEKK), and 131-136 (EAEEEK). The interval 57-136 (VEETEKPIEE…EKKPEAEEEK (80 aa)) is 7 X 5 AA approximate repeats of V-E-E-K-K. Residues 60 to 152 (TEKPIEETEE…VTAPVEKADE (93 aa)) are disordered. Residues 96-138 (DESKTEEVVEAKKEEEVEEKKTEEAPVVVEEEKKPEAEEEKPA) are compositionally biased toward basic and acidic residues.

As to expression, predominantly expressed in petioles (at protein level). Mainly observed in shoots, flowers, siliques and roots, and, to a lower extent, in stems and leaves.

It localises to the cytoplasm. The protein resides in the cytosol. Functionally, binds calcium Ca(2+) and may act as a signal mediator to buffer Ca(2+). In Arabidopsis thaliana (Mouse-ear cress), this protein is Cytosolic calcium-binding protein 1.